The sequence spans 693 residues: Elongation factor G (693 aa).

The region spanning 8 to 282 (KNTRNIGIMA…AVIDYLPSPL (275 aa)) is the tr-type G domain. Residues 17-24 (AHIDAGKT), 81-85 (DTPGH), and 135-138 (NKMD) contribute to the GTP site.

This sequence belongs to the TRAFAC class translation factor GTPase superfamily. Classic translation factor GTPase family. EF-G/EF-2 subfamily.

It is found in the cytoplasm. Functionally, catalyzes the GTP-dependent ribosomal translocation step during translation elongation. During this step, the ribosome changes from the pre-translocational (PRE) to the post-translocational (POST) state as the newly formed A-site-bound peptidyl-tRNA and P-site-bound deacylated tRNA move to the P and E sites, respectively. Catalyzes the coordinated movement of the two tRNA molecules, the mRNA and conformational changes in the ribosome. The polypeptide is Elongation factor G (Staphylococcus epidermidis (strain ATCC 35984 / DSM 28319 / BCRC 17069 / CCUG 31568 / BM 3577 / RP62A)).